The chain runs to 190 residues: uncharacterized protein (190 aa).

The Cytoplasmic segment spans residues 1–55; sequence MSRLRRFNRKILSLSSDYTHDGESDQEDVSILPLDTEEQEELIQKFETNAHITNK. A helical transmembrane segment spans residues 56-76; sequence LYINLLSILYLLYGGLLMILV. The Extracellular portion of the chain corresponds to 77–80; it reads RKSR. The chain crosses the membrane as a helical span at residues 81 to 101; the sequence is GYIKLALLAGANSLICSCITL. The Cytoplasmic portion of the chain corresponds to 102-123; the sequence is RYDIVNDYLLFKKFKLRVSNFS. Residues 124–144 traverse the membrane as a helical segment; sequence INIINIILLVLMAWISFNHVV. Residues 145–149 lie on the Extracellular side of the membrane; sequence EDKKT. Residues 150-170 traverse the membrane as a helical segment; it reads VLCLQVPMFLFWVAVLVKRWA. The Cytoplasmic segment spans residues 171 to 190; the sequence is RNIEDEIADLRCLKYKYKNA.

It localises to the membrane. This is an uncharacterized protein from Saccharomyces cerevisiae (strain ATCC 204508 / S288c) (Baker's yeast).